Consider the following 160-residue polypeptide: Cell division protein SepF (160 aa).

The segment covering 18–30 has biased composition (acidic residues); the sequence is AEGEDDFEDDVDT. Residues 18–72 are disordered; it reads AEGEDDFEDDVDTGETSFDSDHSVTPMPSSSASASTPSAPREQSNPFQGGRVSRI. The segment covering 45–57 has biased composition (low complexity); the sequence is PSSSASASTPSAP.

Belongs to the SepF family. In terms of assembly, homodimer. Interacts with FtsZ.

It is found in the cytoplasm. In terms of biological role, cell division protein that is part of the divisome complex and is recruited early to the Z-ring. Probably stimulates Z-ring formation, perhaps through the cross-linking of FtsZ protofilaments. Its function overlaps with FtsA. In Bifidobacterium adolescentis (strain ATCC 15703 / DSM 20083 / NCTC 11814 / E194a), this protein is Cell division protein SepF.